The primary structure comprises 1285 residues: Period circadian protein homolog 1 (1285 aa).

Residues 1–134 (MSGPLEGADG…SSEQSARART (134 aa)) form a disordered region. Positions 1 to 151 (MSGPLEGADG…LRELKLRLPP (151 aa)) are interaction with BTRC. Low complexity-rich tracts occupy residues 48-57 (NSNGSSGNES) and 64-115 (GASQ…ASSE). The span at 116–132 (QDNPSTSGCSSEQSARA) shows a compositional bias: polar residues. Residue threonine 121 is modified to Phosphothreonine; by CSNK1E. A phosphoserine; by CSNK1E mark is found at serine 122 and serine 126. The Nuclear export signal 1 signature appears at 138 to 147 (LMTALRELKL). PAS domains are found at residues 208–275 (ITSE…PFRL) and 348–414 (YEAP…KILQ). A PAC domain is found at 422 to 465 (HSPIRFCARNGEYVTMDTSWAGFVHPWSRKVAFVLGRHKVRTAP). A Nuclear export signal 2 motif is present at residues 489–498 (LSEQIHRLLL). Disordered regions lie at residues 503-544 (SSSP…PAPV) and 643-694 (TKRK…KEPV). 2 stretches are compositionally biased toward low complexity: residues 523 to 533 (SPGSSSDSNGG) and 648 to 658 (ASSSSCTASSA). The tract at residues 592-811 (ELEVVPMPNQ…GLDSSSATPS (220 aa)) is required for phosphorylation by CSNK1E. A phosphoserine mark is found at serine 657, serine 659, serine 700, and serine 811. Disordered regions lie at residues 802–867 (GLDS…PPST) and 931–1030 (LSQA…DALS). Positions 820 to 836 (VPPGRRHHCRSKAKRSR) match the Nuclear localization signal motif. Over residues 823–840 (GRRHHCRSKAKRSRHHHT) the composition is skewed to basic residues. The segment covering 853–867 (SPVPPSGPWPPPPST) has biased composition (pro residues). The segment covering 943 to 954 (ASHSPSPSLTPL) has biased composition (low complexity). A compositionally biased stretch (polar residues) spans 967–979 (FNSRCSSPLQLNL). 2 positions are modified to phosphoserine: serine 972 and serine 973. Positions 975 to 982 (LQLNLLQL) match the Nuclear export signal 3 motif. The LXXLL motif lies at 1036-1040 (LELLL). Over residues 1045-1055 (RSGTGSAASGS) the composition is skewed to low complexity. Disordered stretches follow at residues 1045–1091 (RSGT…SKYF) and 1202–1285 (IQDP…NSTS). The span at 1056 to 1070 (LGSGLGSGSGSGSHE) shows a compositional bias: gly residues. Over residues 1071-1088 (GGSTSASITRSSQSSHTS) the composition is skewed to low complexity. The interval 1142–1285 (SRDRASVLKQ…ALPAEENSTS (144 aa)) is CRY binding domain. The segment covering 1229–1241 (GEGGGGGGGGGEG) has biased composition (gly residues). Residues 1269-1285 (GGSSSSPALPAEENSTS) are compositionally biased toward polar residues.

In terms of assembly, homodimer. Component of the circadian core oscillator, which includes the CRY proteins, CLOCK or NPAS2, BMAL1 or BMAL2, CSNK1D and/or CSNK1E, TIMELESS, and the PER proteins. Interacts directly with TIMELESS, PER2, PER3, CRY1 and CRY2. Interacts with BMAL1 and CLOCK. Interacts with GPRASP1. Interacts (phosphorylated) with BTRC and FBXW11; the interactions trigger proteasomal degradation. Interacts with NONO, WDR5 and SFPQ. Interacts with USP2. Interacts with HNF4A. In terms of processing, phosphorylated on serine residues by CSNK1D, CSNK1E and probably also by CSNK1G2. Phosphorylation by CSNK1D or CSNK1E promotes nuclear location of PER proteins as well as ubiquitination and subsequent degradation. May be dephosphorylated by PP1. Post-translationally, ubiquitinated; requires phosphorylation by CSNK1E and interaction with BTRC and FBXW11. Deubiquitinated by USP2. In terms of tissue distribution, expressed in the brain, mainly in the suprachiasmatic nucleus (SCN). Expression also found in the harderian gland, lung, eye, intestine, liver and skeletal muscle.

The protein resides in the nucleus. The protein localises to the cytoplasm. Functionally, transcriptional repressor which forms a core component of the circadian clock. The circadian clock, an internal time-keeping system, regulates various physiological processes through the generation of approximately 24 hour circadian rhythms in gene expression, which are translated into rhythms in metabolism and behavior. It is derived from the Latin roots 'circa' (about) and 'diem' (day) and acts as an important regulator of a wide array of physiological functions including metabolism, sleep, body temperature, blood pressure, endocrine, immune, cardiovascular, and renal function. Consists of two major components: the central clock, residing in the suprachiasmatic nucleus (SCN) of the brain, and the peripheral clocks that are present in nearly every tissue and organ system. Both the central and peripheral clocks can be reset by environmental cues, also known as Zeitgebers (German for 'timegivers'). The predominant Zeitgeber for the central clock is light, which is sensed by retina and signals directly to the SCN. The central clock entrains the peripheral clocks through neuronal and hormonal signals, body temperature and feeding-related cues, aligning all clocks with the external light/dark cycle. Circadian rhythms allow an organism to achieve temporal homeostasis with its environment at the molecular level by regulating gene expression to create a peak of protein expression once every 24 hours to control when a particular physiological process is most active with respect to the solar day. Transcription and translation of core clock components (CLOCK, NPAS2, BMAL1, BMAL2, PER1, PER2, PER3, CRY1 and CRY2) plays a critical role in rhythm generation, whereas delays imposed by post-translational modifications (PTMs) are important for determining the period (tau) of the rhythms (tau refers to the period of a rhythm and is the length, in time, of one complete cycle). A diurnal rhythm is synchronized with the day/night cycle, while the ultradian and infradian rhythms have a period shorter and longer than 24 hours, respectively. Disruptions in the circadian rhythms contribute to the pathology of cardiovascular diseases, cancer, metabolic syndromes and aging. A transcription/translation feedback loop (TTFL) forms the core of the molecular circadian clock mechanism. Transcription factors, CLOCK or NPAS2 and BMAL1 or BMAL2, form the positive limb of the feedback loop, act in the form of a heterodimer and activate the transcription of core clock genes and clock-controlled genes (involved in key metabolic processes), harboring E-box elements (5'-CACGTG-3') within their promoters. The core clock genes: PER1/2/3 and CRY1/2 which are transcriptional repressors form the negative limb of the feedback loop and interact with the CLOCK|NPAS2-BMAL1|BMAL2 heterodimer inhibiting its activity and thereby negatively regulating their own expression. This heterodimer also activates nuclear receptors NR1D1/2 and RORA/B/G, which form a second feedback loop and which activate and repress BMAL1 transcription, respectively. Regulates circadian target genes expression at post-transcriptional levels, but may not be required for the repression at transcriptional level. Controls PER2 protein decay. Represses CRY2 preventing its repression on CLOCK/BMAL1 target genes such as FXYD5 and SCNN1A in kidney and PPARA in liver. Besides its involvement in the maintenance of the circadian clock, has an important function in the regulation of several processes. Participates in the repression of glucocorticoid receptor NR3C1/GR-induced transcriptional activity by reducing the association of NR3C1/GR to glucocorticoid response elements (GREs) by BMAL1:CLOCK. Plays a role in the modulation of the neuroinflammatory state via the regulation of inflammatory mediators release, such as CCL2 and IL6. In spinal astrocytes, negatively regulates the MAPK14/p38 and MAPK8/JNK MAPK cascades as well as the subsequent activation of NFkappaB. Coordinately regulates the expression of multiple genes that are involved in the regulation of renal sodium reabsorption. Can act as gene expression activator in a gene and tissue specific manner, in kidney enhances WNK1 and SLC12A3 expression in collaboration with CLOCK. Modulates hair follicle cycling. Represses the CLOCK-BMAL1 induced transcription of BHLHE40/DEC1. This is Period circadian protein homolog 1 (PER1) from Spalax judaei (Judean Mountains blind mole rat).